Consider the following 380-residue polypeptide: MRMQTKLIHGGISEDATTGAVSVPIYQTSTYRQDAIGRHKGYEYSRSGNPTRFALEELIADLEGGVKGFAFASGLAGIHAVFSLLQSGDHVLLGDDVYGGTFRLFNQVLVKNGLSCTIIDTSDISQIKKAIKPNTKALYLETPSNPLLKITDLAQCASVAKDHGLLTIVDNTFATPYYQNPLLLGADIVAHSGTKYLGGHSDVVAGLVTTNNEALAQEIAFFQNAIGGVLGPQDSWLLQRGIKTLGLRMEAHQKNALCVAEFLEKHPKVERVYYPGLPTHPNYELAKKQMRGFSGMLSFTLKNDSEAVAFVESLKLFILGESLGGVESLVGIPAFMTHACIPKTQREAAGIRDGLVRLSVGIEHEQDLLEDLEQAFAKIG.

K195 is subject to N6-(pyridoxal phosphate)lysine.

It belongs to the trans-sulfuration enzymes family. In terms of assembly, homotetramer. Pyridoxal 5'-phosphate serves as cofactor.

The protein localises to the cytoplasm. It catalyses the reaction O-succinyl-L-homoserine + L-cysteine = L,L-cystathionine + succinate + H(+). Its function is as follows. Catalyzes the formation of L-cystathionine from O-succinyl-L-homoserine (OSHS) and L-cysteine, via a gamma-replacement reaction. In the absence of thiol, catalyzes gamma-elimination to form 2-oxobutanoate, succinate and ammonia. This is Cystathionine gamma-synthase (metB) from Helicobacter pylori (strain ATCC 700392 / 26695) (Campylobacter pylori).